Consider the following 231-residue polypeptide: uncharacterized protein (231 aa).

10–34 contacts NADP(+); it reads VVTGAGSGIGEAIATLLHEEGAKVV. Serine 140 lines the substrate pocket. Tyrosine 153 (proton acceptor) is an active-site residue.

Belongs to the short-chain dehydrogenases/reductases (SDR) family.

This is an uncharacterized protein from Staphylococcus aureus (strain N315).